The primary structure comprises 278 residues: Small ribosomal subunit protein uS2 (278 aa).

S2 carries the post-translational modification N-acetylserine. The disordered stretch occupies residues 258 to 278; the sequence is TNEGKTAADEWATGAQTQSNW.

The protein belongs to the universal ribosomal protein uS2 family. In terms of assembly, component of the small ribosomal subunit. Mature ribosomes consist of a small (40S) and a large (60S) subunit. The 40S subunit contains about 33 different proteins and 1 molecule of RNA (18S). The 60S subunit contains about 49 different proteins and 3 molecules of RNA (28S, 5.8S and 5S). Interacts with rps-21.

It is found in the cytoplasm. In terms of biological role, required for the assembly and/or stability of the 40S ribosomal subunit. Required for the processing of the 20S rRNA-precursor to mature 18S rRNA in a late step of the maturation of 40S ribosomal subunits. In Caenorhabditis briggsae, this protein is Small ribosomal subunit protein uS2.